The chain runs to 887 residues: Inter-alpha-trypsin inhibitor heavy chain H3 (887 aa).

Residues 1–21 form the signal peptide; sequence MVTLWWPCLVLALLSGLETSG. A propeptide spanning residues 22-33 is cleaved from the precursor; that stretch reads FPRSPLRLLGKR. The 130-residue stretch at 29–158 folds into the VIT domain; sequence LLGKRSLPEG…KVIFELTYEE (130 aa). A glycan (N-linked (GlcNAc...) asparagine) is linked at N91. In terms of domain architecture, VWFA spans 282–442; that stretch reads PKNIAFVIDV…YNFLESLALE (161 aa). N-linked (GlcNAc...) asparagine glycosylation occurs at N580. D647 bears the Aspartate 1-(chondroitin 4-sulfate)-ester mark. A propeptide spanning residues 648–887 is cleaved from the precursor; sequence PHFIIQVPGK…HTDYIVPSLF (240 aa).

This sequence belongs to the ITIH family. As to quaternary structure, I-alpha-I plasma protease inhibitors are assembled from one or two heavy chains (HC) and one light chain, bikunin. Pre-alpha-inhibitor (P-alpha-I) is composed of ITIH3/HC3 and bikunin. Heavy chains are linked to bikunin via chondroitin 4-sulfate esterified to the alpha-carboxyl of the C-terminal aspartate after propeptide cleavage.

It localises to the secreted. In terms of biological role, may act as a carrier of hyaluronan in serum or as a binding protein between hyaluronan and other matrix protein, including those on cell surfaces in tissues to regulate the localization, synthesis and degradation of hyaluronan which are essential to cells undergoing biological processes. The chain is Inter-alpha-trypsin inhibitor heavy chain H3 (Itih3) from Rattus norvegicus (Rat).